The sequence spans 92 residues: Large ribosomal subunit protein eL43A (92 aa).

The C4-type zinc finger occupies 39 to 60; it reads CSFCGKKTVKRGAAGIWTCSCC. Position 40 is a phosphoserine (Ser40).

Belongs to the eukaryotic ribosomal protein eL43 family. As to quaternary structure, component of the large ribosomal subunit (LSU). Mature yeast ribosomes consist of a small (40S) and a large (60S) subunit. The 40S small subunit contains 1 molecule of ribosomal RNA (18S rRNA) and 33 different proteins (encoded by 57 genes). The large 60S subunit contains 3 rRNA molecules (25S, 5.8S and 5S rRNA) and 46 different proteins (encoded by 81 genes).

The protein localises to the cytoplasm. Its function is as follows. Component of the ribosome, a large ribonucleoprotein complex responsible for the synthesis of proteins in the cell. The small ribosomal subunit (SSU) binds messenger RNAs (mRNAs) and translates the encoded message by selecting cognate aminoacyl-transfer RNA (tRNA) molecules. The large subunit (LSU) contains the ribosomal catalytic site termed the peptidyl transferase center (PTC), which catalyzes the formation of peptide bonds, thereby polymerizing the amino acids delivered by tRNAs into a polypeptide chain. The nascent polypeptides leave the ribosome through a tunnel in the LSU and interact with protein factors that function in enzymatic processing, targeting, and the membrane insertion of nascent chains at the exit of the ribosomal tunnel. This Saccharomyces cerevisiae (strain ATCC 204508 / S288c) (Baker's yeast) protein is Large ribosomal subunit protein eL43A.